Reading from the N-terminus, the 199-residue chain is Recombination protein RecR (199 aa).

Residues 56–71 form a C4-type zinc finger; it reads CQQCNNYTEQTLCALC. One can recognise a Toprim domain in the interval 79–174; it reads TLLCVVESPA…NISQLAHGIP (96 aa).

The protein belongs to the RecR family.

Functionally, may play a role in DNA repair. It seems to be involved in an RecBC-independent recombinational process of DNA repair. It may act with RecF and RecO. The protein is Recombination protein RecR of Legionella pneumophila subsp. pneumophila (strain Philadelphia 1 / ATCC 33152 / DSM 7513).